A 426-amino-acid chain; its full sequence is Glutamyl-tRNA reductase (426 aa).

Substrate-binding positions include 49–52 (TCNR), serine 110, 115–117 (EAQ), and glutamine 121. Cysteine 50 acts as the Nucleophile in catalysis. NADP(+) is bound at residue 191-196 (GAGEMA).

This sequence belongs to the glutamyl-tRNA reductase family. In terms of assembly, homodimer.

The catalysed reaction is (S)-4-amino-5-oxopentanoate + tRNA(Glu) + NADP(+) = L-glutamyl-tRNA(Glu) + NADPH + H(+). The protein operates within porphyrin-containing compound metabolism; protoporphyrin-IX biosynthesis; 5-aminolevulinate from L-glutamyl-tRNA(Glu): step 1/2. Its function is as follows. Catalyzes the NADPH-dependent reduction of glutamyl-tRNA(Glu) to glutamate 1-semialdehyde (GSA). The protein is Glutamyl-tRNA reductase of Rhodopirellula baltica (strain DSM 10527 / NCIMB 13988 / SH1).